A 181-amino-acid polypeptide reads, in one-letter code: MEFFDVKKMPVNLWRNGAGETREICCYPPSRDFNWRASIASLASNGEFNVVPQVDRVVTLLDGGEVTLLGGGAFRHTLKRHQPFTFAGEHPVRAELTDGRMSLDFNLMTRRDRCRAQVRVADRTFTTGRARGGIVYVLSGAWQLNDKLLTPEQGAWWQEGSHTLRLLKAEGQVLFSEITYL.

Belongs to the Ves family.

In Cronobacter sakazakii (strain ATCC BAA-894) (Enterobacter sakazakii), this protein is Protein Ves.